Here is a 428-residue protein sequence, read N- to C-terminus: Elongation factor 1-alpha (428 aa).

The region spanning 5–217 is the tr-type G domain; that stretch reads KPHVNIVFIG…DQIPEPEKPI (213 aa). The segment at 14–21 is G1; it reads GHVDHGKS. 14–21 serves as a coordination point for GTP; it reads GHVDHGKS. S21 is a Mg(2+) binding site. The interval 68–72 is G2; it reads GITID. The interval 89-92 is G3; it reads DAPG. GTP is bound by residues 89 to 93 and 144 to 147; these read DAPGH and NKMD. Residues 144–147 are G4; that stretch reads NKMD. Residues 181–183 form a G5 region; the sequence is SAW.

Belongs to the TRAFAC class translation factor GTPase superfamily. Classic translation factor GTPase family. EF-Tu/EF-1A subfamily.

It is found in the cytoplasm. The enzyme catalyses GTP + H2O = GDP + phosphate + H(+). Functionally, GTP hydrolase that promotes the GTP-dependent binding of aminoacyl-tRNA to the A-site of ribosomes during protein biosynthesis. This is Elongation factor 1-alpha from Pyrococcus horikoshii (strain ATCC 700860 / DSM 12428 / JCM 9974 / NBRC 100139 / OT-3).